Here is a 388-residue protein sequence, read N- to C-terminus: tRNA (guanine-N(7)-)-methyltransferase non-catalytic subunit (388 aa).

WD repeat units follow at residues Val58–Ile102, Val112–Met151, Gly153–Phe194, and Gly196–Arg234. Residues Glu365–Ser388 are disordered.

Belongs to the WD repeat TRM82 family. As to quaternary structure, forms a heterodimer with the catalytic subunit.

The protein resides in the nucleus. Its pathway is tRNA modification; N(7)-methylguanine-tRNA biosynthesis. In terms of biological role, required for the formation of N(7)-methylguanine at position 46 (m7G46) in tRNA. In the complex, it is required to stabilize and induce conformational changes of the catalytic subunit. In Caenorhabditis elegans, this protein is tRNA (guanine-N(7)-)-methyltransferase non-catalytic subunit.